A 92-amino-acid polypeptide reads, in one-letter code: DNA-directed RNA polymerase subunit Rpo11 (92 aa).

This sequence belongs to the archaeal Rpo11/eukaryotic RPB11/RPC19 RNA polymerase subunit family. In terms of assembly, part of the RNA polymerase complex.

The protein localises to the cytoplasm. It catalyses the reaction RNA(n) + a ribonucleoside 5'-triphosphate = RNA(n+1) + diphosphate. Its function is as follows. DNA-dependent RNA polymerase (RNAP) catalyzes the transcription of DNA into RNA using the four ribonucleoside triphosphates as substrates. The chain is DNA-directed RNA polymerase subunit Rpo11 from Pyrobaculum aerophilum (strain ATCC 51768 / DSM 7523 / JCM 9630 / CIP 104966 / NBRC 100827 / IM2).